Reading from the N-terminus, the 276-residue chain is Kallikrein-10 (276 aa).

The first 30 residues, 1–30, serve as a signal peptide directing secretion; it reads MRAPHLHLSAASGARALAKLLPLLMAQLWA. N39 carries N-linked (GlcNAc...) asparagine glycosylation. Residues 47–274 form the Peptidase S1 domain; that stretch reads AYGSPCARGS…YMSWINKVIR (228 aa). 5 disulfide bridges follow: C52/C162, C71/C87, C169/C235, C201/C215, and C225/C250. Active-site charge relay system residues include H86 and D137. S229 serves as the catalytic Charge relay system.

It belongs to the peptidase S1 family. Kallikrein subfamily. As to expression, expressed in breast, ovary and prostate.

The protein resides in the secreted. In terms of biological role, has a tumor-suppressor role for NES1 in breast and prostate cancer. This chain is Kallikrein-10 (KLK10), found in Homo sapiens (Human).